A 285-amino-acid polypeptide reads, in one-letter code: 2-oxoglutarate synthase subunit KorB (285 aa).

Heterotetramer of the KorA, KorB, KorC and KorD subunits.

It catalyses the reaction 2 oxidized [2Fe-2S]-[ferredoxin] + 2-oxoglutarate + CoA = succinyl-CoA + 2 reduced [2Fe-2S]-[ferredoxin] + CO2 + H(+). This is 2-oxoglutarate synthase subunit KorB (korB) from Methanothermobacter marburgensis (strain ATCC BAA-927 / DSM 2133 / JCM 14651 / NBRC 100331 / OCM 82 / Marburg) (Methanobacterium thermoautotrophicum).